The sequence spans 108 residues: UPF0060 membrane protein Ent638_1931 (108 aa).

The next 4 helical transmembrane spans lie at 6 to 26 (LLFF…WLWL), 29 to 49 (GASV…VWLL), 61 to 81 (AAYG…VDGV), and 85 to 105 (AYDW…VAGW).

Belongs to the UPF0060 family.

The protein resides in the cell inner membrane. The chain is UPF0060 membrane protein Ent638_1931 from Enterobacter sp. (strain 638).